The chain runs to 132 residues: uncharacterized protein (132 aa).

The next 2 helical transmembrane spans lie at Phe44–Ile64 and Ile75–Phe95.

The protein localises to the cytoplasm. It is found in the membrane. This is an uncharacterized protein from Schizosaccharomyces pombe (strain 972 / ATCC 24843) (Fission yeast).